The chain runs to 352 residues: Small glutamine-rich tetratricopeptide repeat-containing protein 2 (352 aa).

Low complexity predominate over residues P80–P97. A disordered region spans residues P80 to A103. 3 TPR repeats span residues A105 to S138, V140 to F172, and G173 to N206. The tract at residues K217 to G236 is disordered.

This sequence belongs to the SGT family.

In terms of biological role, co-chaperone that binds to the molecular chaperone Hsp70 and regulates Hsp70 ATPase activity. The chain is Small glutamine-rich tetratricopeptide repeat-containing protein 2 from Mycosarcoma maydis (Corn smut fungus).